A 579-amino-acid polypeptide reads, in one-letter code: GPI alpha-1,2-mannosyltransferase 4 (579 aa).

8 consecutive transmembrane segments (helical) span residues 131–151 (LLLT…APPM), 156–173 (WNAL…VFYT), 180–200 (IEGL…TWGP), 216–236 (LGGI…FAVV), 258–278 (ALVL…TDSW), 369–389 (YLLL…HQEA), 391–411 (FLIP…QPVP), and 416–436 (VVLF…GGLV).

This sequence belongs to the glycosyltransferase 22 family. PIGZ subfamily. As to expression, widely expressed at low level, with highest level in brain and colon.

The protein localises to the endoplasmic reticulum membrane. It functions in the pathway glycolipid biosynthesis; glycosylphosphatidylinositol-anchor biosynthesis. Alpha-1,2-mannosyltransferase that catalyzes the transfer of the fourth mannose, via an alpha-1,2 bond, from a dolichol-phosphate-mannose (Dol-P-Man) to an alpha-D-Man-(1-&gt;2)-alpha-D-Man-(1-&gt;6)-2-PEtn-alpha-D-Man-(1-&gt;4)-alpha-D-GlcN-(1-&gt;6)-(1-radyl,2-acyl-sn-glycero-3-phospho)-2-acyl-inositol (also termed H6) intermediate and participates in the twelfth step of the glycosylphosphatidylinositol-anchor biosynthesis. The presence of a fourth mannose in GPI is facultative, suggesting that it only exists in some tissues. The polypeptide is GPI alpha-1,2-mannosyltransferase 4 (Homo sapiens (Human)).